Here is a 147-residue protein sequence, read N- to C-terminus: Large ribosomal subunit protein bL9 (147 aa).

Belongs to the bacterial ribosomal protein bL9 family.

Functionally, binds to the 23S rRNA. The sequence is that of Large ribosomal subunit protein bL9 from Shouchella clausii (strain KSM-K16) (Alkalihalobacillus clausii).